Reading from the N-terminus, the 380-residue chain is Probable G-protein coupled receptor 132 (380 aa).

Over 1-45 the chain is Extracellular; that stretch reads MCPMLLKNGYNGNATPVTTTAPWASLGLSAKTCNNVSFEESRIVL. N-linked (GlcNAc...) asparagine glycosylation is present at N35. The helical transmembrane segment at 46–68 threads the bilayer; sequence VVVYSAVCTLGVPANCLTAWLAL. Topologically, residues 69–79 are cytoplasmic; it reads LQVLQGNVLAV. The chain crosses the membrane as a helical span at residues 80-102; the sequence is YLLCLALCELLYTGTLPLWVIYI. Over 103–116 the chain is Extracellular; sequence RNQHRWTLGLLACK. C115 and C186 are joined by a disulfide. A helical transmembrane segment spans residues 117–138; it reads VTAYIFFCNIYVSILFLCCISC. The Cytoplasmic segment spans residues 139–158; sequence DRFVAVVYALESRGRRRRRT. The helical transmembrane segment at 159 to 178 threads the bilayer; that stretch reads AILISACIFILVGIVHYPVF. At 179-197 the chain is on the extracellular side; sequence QTEDKETCFDMLQMDSRIA. Residues 198 to 220 form a helical membrane-spanning segment; it reads GYYYARFTVGFAIPLSIIAFTNH. Topologically, residues 221 to 246 are cytoplasmic; the sequence is RIFRSIKQSMGLSAAQKAKVKHSAIA. A helical membrane pass occupies residues 247-269; that stretch reads VVVIFLVCFAPYHLVLLVKAAAF. The Extracellular segment spans residues 270–288; the sequence is SYYRGDRNAMCGLEERLYT. Residues 289–311 traverse the membrane as a helical segment; the sequence is ASVVFLCLSTVNGVADPIIYVLA. Topologically, residues 312 to 380 are cytoplasmic; that stretch reads TDHSRQEVSR…PAKRLIEESC (69 aa).

This sequence belongs to the G-protein coupled receptor 1 family. As to expression, highly expressed in macrophages and hematopoietic tissues rich in lymphocytes, like spleen and thymus. Weakly expressed in heart and lung. In atherosclerotic plaques, expression is observed around the lipid core and at the shoulder region.

The protein localises to the cell membrane. In terms of biological role, may be a receptor for oxidized free fatty acids derived from linoleic and arachidonic acids such as 9-hydroxyoctadecadienoic acid (9-HODE). Activates a G alpha protein, most likely G alpha(q). May be involved in apoptosis. Functions at the G2/M checkpoint to delay mitosis. May function as a sensor that monitors the oxidative states and mediates appropriate cellular responses such as secretion of paracrine signals and attenuation of proliferation. May mediate ths accumulation of intracellular inositol phosphates at acidic pH through proton-sensing activity. This is Probable G-protein coupled receptor 132 (GPR132) from Homo sapiens (Human).